Consider the following 228-residue polypeptide: Eukaryotic translation initiation factor 6 (228 aa).

Belongs to the eIF-6 family. As to quaternary structure, monomer. Associates with the 60S ribosomal subunit.

Its subcellular location is the cytoplasm. The protein localises to the nucleus. The protein resides in the nucleolus. Functionally, binds to the 60S ribosomal subunit and prevents its association with the 40S ribosomal subunit to form the 80S initiation complex in the cytoplasm. May also be involved in ribosome biogenesis. The polypeptide is Eukaryotic translation initiation factor 6 (Guillardia theta (Cryptophyte)).